The following is a 541-amino-acid chain: Imidazole glycerol phosphate synthase hisHF (541 aa).

Positions 2-214 (IVSIVDYGSG…LTGNYEQPIS (213 aa)) constitute a Glutamine amidotransferase type-1 domain. Catalysis depends on for GATase activity residues Cys-80, His-189, and Glu-191. The cyclase stretch occupies residues 228 to 541 (LTKRIIACLD…LAIHDVLVRT (314 aa)). Residues Asp-237 and Asp-396 contribute to the active site.

It in the C-terminal section; belongs to the HisA/HisF family.

It carries out the reaction 5-[(5-phospho-1-deoxy-D-ribulos-1-ylimino)methylamino]-1-(5-phospho-beta-D-ribosyl)imidazole-4-carboxamide + L-glutamine = D-erythro-1-(imidazol-4-yl)glycerol 3-phosphate + 5-amino-1-(5-phospho-beta-D-ribosyl)imidazole-4-carboxamide + L-glutamate + H(+). It catalyses the reaction L-glutamine + H2O = L-glutamate + NH4(+). It functions in the pathway amino-acid biosynthesis; L-histidine biosynthesis; L-histidine from 5-phospho-alpha-D-ribose 1-diphosphate: step 5/9. Its function is as follows. IGPS catalyzes the conversion of PRFAR and glutamine to IGP, AICAR and glutamate. The glutaminase domain produces the ammonia necessary for the cyclase domain to produce IGP and AICAR from PRFAR. The ammonia is channeled to the active site of the cyclase domain. The chain is Imidazole glycerol phosphate synthase hisHF (his4) from Schizosaccharomyces pombe (strain 972 / ATCC 24843) (Fission yeast).